A 103-amino-acid chain; its full sequence is Large ribosomal subunit protein uL24 (103 aa).

It belongs to the universal ribosomal protein uL24 family. Part of the 50S ribosomal subunit.

Functionally, one of two assembly initiator proteins, it binds directly to the 5'-end of the 23S rRNA, where it nucleates assembly of the 50S subunit. Its function is as follows. One of the proteins that surrounds the polypeptide exit tunnel on the outside of the subunit. This Brucella ovis (strain ATCC 25840 / 63/290 / NCTC 10512) protein is Large ribosomal subunit protein uL24.